We begin with the raw amino-acid sequence, 251 residues long: DNA repair protein RecO (251 aa).

It belongs to the RecO family.

Involved in DNA repair and RecF pathway recombination. The protein is DNA repair protein RecO of Acetivibrio thermocellus (strain ATCC 27405 / DSM 1237 / JCM 9322 / NBRC 103400 / NCIMB 10682 / NRRL B-4536 / VPI 7372) (Clostridium thermocellum).